A 108-amino-acid chain; its full sequence is Peptidyl-prolyl cis-trans isomerase FKBP1A (108 aa).

The 89-residue stretch at 20–108 (GQTCVVHYTG…VFDVELLKLE (89 aa)) folds into the PPIase FKBP-type domain. Position 53 is an N6-acetyllysine; alternate (lysine 53). Lysine 53 is subject to N6-succinyllysine; alternate.

This sequence belongs to the FKBP-type PPIase family. FKBP1 subfamily. Interacts with TGFBR1; prevents TGFBR1 phosphorylation by TGFBR2 and stabilizes it in the inactive conformation. Interacts with ACVR1B and SMAD7. Identified in a complex composed of RYR1, PDE4D, PKA, FKBP1A and protein phosphatase 1 (PP1). Interacts directly with RYR2 and RYR3. Interacts directly with RYR1. Interacts with GLMN; rapamycin and FK506 abolish the interaction with GLMN in a dose dependent manner.

Its subcellular location is the cytoplasm. The protein resides in the cytosol. It is found in the sarcoplasmic reticulum membrane. It catalyses the reaction [protein]-peptidylproline (omega=180) = [protein]-peptidylproline (omega=0). Its activity is regulated as follows. Inhibited by both FK506 and rapamycin. In terms of biological role, keeps in an inactive conformation TGFBR1, the TGF-beta type I serine/threonine kinase receptor, preventing TGF-beta receptor activation in absence of ligand. Recruits SMAD7 to ACVR1B which prevents the association of SMAD2 and SMAD3 with the activin receptor complex, thereby blocking the activin signal. May modulate the RYR1 calcium channel activity. PPIases accelerate the folding of proteins. It catalyzes the cis-trans isomerization of proline imidic peptide bonds in oligopeptides. The polypeptide is Peptidyl-prolyl cis-trans isomerase FKBP1A (Fkbp1a) (Mus musculus (Mouse)).